A 531-amino-acid chain; its full sequence is 2,3-bisphosphoglycerate-independent phosphoglycerate mutase (531 aa).

Positions 13 and 63 each coordinate Mn(2+). The Phosphoserine intermediate role is filled by Ser-63. Substrate-binding positions include His-124, 154–155 (RD), Arg-187, Arg-193, 261–264 (RPDR), and Lys-342. Mn(2+)-binding residues include Asp-420, His-424, Asp-462, His-463, and His-480.

Belongs to the BPG-independent phosphoglycerate mutase family. Monomer. Requires Mn(2+) as cofactor.

The enzyme catalyses (2R)-2-phosphoglycerate = (2R)-3-phosphoglycerate. It participates in carbohydrate degradation; glycolysis; pyruvate from D-glyceraldehyde 3-phosphate: step 3/5. In terms of biological role, catalyzes the interconversion of 2-phosphoglycerate and 3-phosphoglycerate. This Mycoplasma mycoides subsp. mycoides SC (strain CCUG 32753 / NCTC 10114 / PG1) protein is 2,3-bisphosphoglycerate-independent phosphoglycerate mutase.